The primary structure comprises 78 residues: Exodeoxyribonuclease 7 small subunit (78 aa).

The protein belongs to the XseB family. In terms of assembly, heterooligomer composed of large and small subunits.

Its subcellular location is the cytoplasm. It catalyses the reaction Exonucleolytic cleavage in either 5'- to 3'- or 3'- to 5'-direction to yield nucleoside 5'-phosphates.. Functionally, bidirectionally degrades single-stranded DNA into large acid-insoluble oligonucleotides, which are then degraded further into small acid-soluble oligonucleotides. In Idiomarina loihiensis (strain ATCC BAA-735 / DSM 15497 / L2-TR), this protein is Exodeoxyribonuclease 7 small subunit.